The primary structure comprises 266 residues: MFRQVSVRALRRAAGRSVCASRAQMVRHSSTLGGGKGSYNLDMPALALAAGVTLLAGYMVYPRAPKAKQAAVQSVAPVNENVEQASASLQASAPVQATSESAEAGEEEAYGEESGAVNEEAAGEPEEAAAEVGETQAEQAPAVETEQAAEAEQAAEAAAEDKASAGEAAQGQQGAYNPDTGEINWDCPCLGGMAHGPCGEEFKAAFACFVYSEAEPKGIDCVEKFQVMQDCFRQHPEHYAEQLESEEQAVRETEAAAESAKSDEGH.

The transit peptide at 1 to 28 directs the protein to the mitochondrion; it reads MFRQVSVRALRRAAGRSVCASRAQMVRH. Residues 29-44 are Mitochondrial matrix-facing; the sequence is SSTLGGGKGSYNLDMP. A helical; Signal-anchor for type II membrane protein transmembrane segment spans residues 45 to 61; that stretch reads ALALAAGVTLLAGYMVY. Residues 62–266 lie on the Mitochondrial intermembrane side of the membrane; sequence PRAPKAKQAA…AESAKSDEGH (205 aa). The segment covering 87 to 98 has biased composition (polar residues); that stretch reads ASLQASAPVQAT. Residues 87–180 form a disordered region; sequence ASLQASAPVQ…GQQGAYNPDT (94 aa). 2 stretches are compositionally biased toward low complexity: residues 130 to 157 and 165 to 175; these read AEVGETQAEQAPAVETEQAAEAEQAAEA and AGEAAQGQQGA. 3 cysteine pairs are disulfide-bonded: cysteine 187-cysteine 189, cysteine 198-cysteine 231, and cysteine 208-cysteine 221. A CHCH domain is found at 195-239; the sequence is HGPCGEEFKAAFACFVYSEAEPKGIDCVEKFQVMQDCFRQHPEHY. 2 short sequence motifs (cx9C motif) span residues 198 to 208 and 221 to 231; these read CGEEFKAAFAC and CVEKFQVMQDC. A disordered region spans residues 242-266; it reads QLESEEQAVRETEAAAESAKSDEGH. A compositionally biased stretch (basic and acidic residues) spans 248 to 266; the sequence is QAVRETEAAAESAKSDEGH.

Monomer. Cu(2+) is required as a cofactor. Zn(2+) serves as cofactor.

The protein localises to the mitochondrion inner membrane. Required for the import and folding of small cysteine-containing proteins (small Tim) in the mitochondrial intermembrane space (IMS). Forms a redox cycle with ERV1 that involves a disulfide relay system. Precursor proteins to be imported into the IMS are translocated in their reduced form into the mitochondria. The oxidized form of MIA40 forms a transient intermolecular disulfide bridge with the reduced precursor protein, resulting in oxidation of the precursor protein that now contains an intramolecular disulfide bond and is able to undergo folding in the IMS. The protein is Mitochondrial intermembrane space import and assembly protein 40 (MIA40) of Eremothecium gossypii (strain ATCC 10895 / CBS 109.51 / FGSC 9923 / NRRL Y-1056) (Yeast).